We begin with the raw amino-acid sequence, 514 residues long: 1-pyrroline-5-carboxylate dehydrogenase (514 aa).

Active-site residues include E286 and C320.

The protein belongs to the aldehyde dehydrogenase family. RocA subfamily.

It catalyses the reaction L-glutamate 5-semialdehyde + NAD(+) + H2O = L-glutamate + NADH + 2 H(+). It functions in the pathway amino-acid degradation; L-proline degradation into L-glutamate; L-glutamate from L-proline: step 2/2. The polypeptide is 1-pyrroline-5-carboxylate dehydrogenase (Staphylococcus saprophyticus subsp. saprophyticus (strain ATCC 15305 / DSM 20229 / NCIMB 8711 / NCTC 7292 / S-41)).